We begin with the raw amino-acid sequence, 328 residues long: Formimidoylglutamase (328 aa).

Positions 133, 159, 161, 163, 253, and 255 each coordinate Mn(2+).

The protein belongs to the arginase family. Requires Mn(2+) as cofactor.

It carries out the reaction N-formimidoyl-L-glutamate + H2O = formamide + L-glutamate. Its pathway is amino-acid degradation; L-histidine degradation into L-glutamate; L-glutamate from N-formimidoyl-L-glutamate (hydrolase route): step 1/1. Its function is as follows. Catalyzes the conversion of N-formimidoyl-L-glutamate to L-glutamate and formamide. The sequence is that of Formimidoylglutamase from Streptococcus pyogenes serotype M28 (strain MGAS6180).